The sequence spans 299 residues: ATP phosphoribosyltransferase (299 aa).

Belongs to the ATP phosphoribosyltransferase family. Long subfamily. Equilibrium between an active dimeric form, an inactive hexameric form and higher aggregates. Interconversion between the various forms is largely reversible and is influenced by the natural substrates and inhibitors of the enzyme. Mg(2+) is required as a cofactor.

The protein resides in the cytoplasm. The enzyme catalyses 1-(5-phospho-beta-D-ribosyl)-ATP + diphosphate = 5-phospho-alpha-D-ribose 1-diphosphate + ATP. It functions in the pathway amino-acid biosynthesis; L-histidine biosynthesis; L-histidine from 5-phospho-alpha-D-ribose 1-diphosphate: step 1/9. Feedback inhibited by histidine. Functionally, catalyzes the condensation of ATP and 5-phosphoribose 1-diphosphate to form N'-(5'-phosphoribosyl)-ATP (PR-ATP). Has a crucial role in the pathway because the rate of histidine biosynthesis seems to be controlled primarily by regulation of HisG enzymatic activity. This Salmonella enteritidis PT4 (strain P125109) protein is ATP phosphoribosyltransferase.